An 885-amino-acid chain; its full sequence is DNA mismatch repair protein MutS (885 aa).

Residues 1–67 are disordered; sequence MAPGEQQLSL…SNNDDEGLPR (67 aa). Basic and acidic residues predominate over residues 26-36; sequence SEDKTEESERP. Residue 691-698 participates in ATP binding; sequence GPNASGKS.

It belongs to the DNA mismatch repair MutS family.

Functionally, this protein is involved in the repair of mismatches in DNA. It is possible that it carries out the mismatch recognition step. This protein has a weak ATPase activity. This chain is DNA mismatch repair protein MutS, found in Synechococcus sp. (strain RCC307).